The primary structure comprises 152 residues: uncharacterized protein (152 aa).

The chain crosses the membrane as a helical span at residues 7–27 (TLSVIVFLISLIIIFGIYFSS).

The protein localises to the membrane. This is an uncharacterized protein from Methanocaldococcus jannaschii (strain ATCC 43067 / DSM 2661 / JAL-1 / JCM 10045 / NBRC 100440) (Methanococcus jannaschii).